Reading from the N-terminus, the 304-residue chain is Hairy/enhancer-of-split related with YRPW motif protein 1 (304 aa).

The disordered stretch occupies residues Met1 to Arg52. Polar residues predominate over residues Glu28–Ile47. The interval Leu48–Ala117 is transcriptional repression and interaction with NCOR1 and SIN3A. Positions Ala49–Leu104 constitute a bHLH domain. The Orange domain occupies Tyr122–Leu158. Positions Ser197–Thr211 are enriched in polar residues. Positions Ser197–Ser234 are disordered. The YRPW motif signature appears at Tyr294 to Trp297.

It belongs to the HEY family. As to quaternary structure, self-associates. Interacts with HES1 and HEYL. Interacts with HDAC1, NCOR1 and SIN3A. Interacts with GATA4 and GATA6. Interacts with CCDC89/BOIP.

The protein resides in the nucleus. Transcriptional repressor which binds preferentially to the canonical E box sequence 5'-CACGTG-3'. Downstream effector of Notch signaling required for cardiovascular development. Specifically required for the Notch-induced endocardial epithelial to mesenchymal transition, which is itself criticial for cardiac valve and septum development. May be required in conjunction with HEY2 to specify arterial cell fate or identity. Promotes maintenance of neuronal precursor cells and glial versus neuronal fate specification. Represses transcription by the cardiac transcriptional activators GATA4 and GATA6 and by the neuronal bHLH factors ASCL1/MASH1 and NEUROD4/MATH3. This chain is Hairy/enhancer-of-split related with YRPW motif protein 1 (HEY1), found in Bos taurus (Bovine).